A 215-amino-acid chain; its full sequence is 3-isopropylmalate dehydratase small subunit (215 aa).

The protein belongs to the LeuD family. LeuD type 1 subfamily. In terms of assembly, heterodimer of LeuC and LeuD.

The catalysed reaction is (2R,3S)-3-isopropylmalate = (2S)-2-isopropylmalate. It functions in the pathway amino-acid biosynthesis; L-leucine biosynthesis; L-leucine from 3-methyl-2-oxobutanoate: step 2/4. Catalyzes the isomerization between 2-isopropylmalate and 3-isopropylmalate, via the formation of 2-isopropylmaleate. The protein is 3-isopropylmalate dehydratase small subunit of Teredinibacter turnerae (strain ATCC 39867 / T7901).